Here is a 698-residue protein sequence, read N- to C-terminus: Quillaic acid 3-O-glycosyltransferase CSL1 (698 aa).

A helical transmembrane segment spans residues 14–34 (ALLSRLHILFHSALVASVFYY). Asn-38 carries an N-linked (GlcNAc...) asparagine glycan. The helical transmembrane segment at 42-62 (GPAWALMTFAELTLAFIWALT) threads the bilayer. 2 residues coordinate UDP-alpha-D-glucose: Lys-99 and Glu-100. Asp-129 is an active-site residue. N-linked (GlcNAc...) asparagine glycosylation is present at Asn-317. Ser-436 is an active-site residue. 6 helical membrane-spanning segments follow: residues 478 to 498 (WTSG…YAMS), 508 to 528 (YAYF…GVVL), 546 to 566 (WLLA…YEVL), 581 to 601 (IWII…MLNK), 636 to 656 (MFMV…FGGL), and 669 to 689 (FAQL…MEEI).

The protein belongs to the glycosyltransferase 2 family. Plant cellulose synthase-like G subfamily. Mainly expressed in flowers and flower buds and, to a lesser extent, in leaves, stems and roots.

The protein localises to the golgi apparatus membrane. Its pathway is secondary metabolite biosynthesis; terpenoid biosynthesis. Functionally, component of the oleanane-type triterpene saponins (e.g. saponarioside A and saponarioside B) biosynthetic pathway, leading to the production of natural products with detergent properties used as traditional sources of soap. Glycosyltransferase that mediates the conversion of quillaic acid (QA) to QA-mono via the initiation of the C-3 sugar chain. This chain is Quillaic acid 3-O-glycosyltransferase CSL1, found in Saponaria officinalis (Common soapwort).